The following is a 154-amino-acid chain: Ubiquitin-like protein 4A-A (154 aa).

A Ubiquitin-like domain is found at 1-76 (MILTVKPLQG…LNLVVRPAGE (76 aa)).

Component of the BAT3 complex.

The protein localises to the cytoplasm. It localises to the cytosol. Functionally, component of the BAT3 complex, a multiprotein complex involved in the post-translational delivery of tail-anchored (TA) membrane proteins to the endoplasmic reticulum membrane. TA membrane proteins, also named type II transmembrane proteins, contain a single C-terminal transmembrane region. The chain is Ubiquitin-like protein 4A-A (ubl4aa) from Oncorhynchus mykiss (Rainbow trout).